The chain runs to 273 residues: Type III pantothenate kinase (273 aa).

Residue 5 to 12 (DVGNSHVV) participates in ATP binding. 112-115 (GTDL) lines the substrate pocket. Catalysis depends on aspartate 114, which acts as the Proton acceptor. Residue aspartate 134 coordinates K(+). Threonine 137 contributes to the ATP binding site. Substrate is bound at residue threonine 189.

The protein belongs to the type III pantothenate kinase family. In terms of assembly, homodimer. NH4(+) is required as a cofactor. K(+) serves as cofactor.

It localises to the cytoplasm. The catalysed reaction is (R)-pantothenate + ATP = (R)-4'-phosphopantothenate + ADP + H(+). The protein operates within cofactor biosynthesis; coenzyme A biosynthesis; CoA from (R)-pantothenate: step 1/5. Catalyzes the phosphorylation of pantothenate (Pan), the first step in CoA biosynthesis. This chain is Type III pantothenate kinase, found in Treponema pallidum subsp. pallidum (strain SS14).